The primary structure comprises 155 residues: Ribosome maturation factor RimP (155 aa).

Belongs to the RimP family.

It is found in the cytoplasm. Functionally, required for maturation of 30S ribosomal subunits. This Macrococcus caseolyticus (strain JCSC5402) (Macrococcoides caseolyticum) protein is Ribosome maturation factor RimP.